Consider the following 162-residue polypeptide: Phosphopantetheine adenylyltransferase (162 aa).

Position 9 (Ser9) interacts with substrate. Residues Ser9 to Phe10 and His17 contribute to the ATP site. Residues Lys41, Val77, and Lys91 each contribute to the substrate site. ATP-binding positions include Gly92–Arg94, Glu102, and Tyr126–Ser132.

Belongs to the bacterial CoaD family. As to quaternary structure, homohexamer. Mg(2+) is required as a cofactor.

The protein resides in the cytoplasm. It carries out the reaction (R)-4'-phosphopantetheine + ATP + H(+) = 3'-dephospho-CoA + diphosphate. Its pathway is cofactor biosynthesis; coenzyme A biosynthesis; CoA from (R)-pantothenate: step 4/5. Its function is as follows. Reversibly transfers an adenylyl group from ATP to 4'-phosphopantetheine, yielding dephospho-CoA (dPCoA) and pyrophosphate. This Frankia alni (strain DSM 45986 / CECT 9034 / ACN14a) protein is Phosphopantetheine adenylyltransferase.